Reading from the N-terminus, the 790-residue chain is MKFSEYWLREWVDPQLSSEALVQQITMAGLEVDAAERVAKPFSGIVVGEVLSVEPHPDADKLRVCKVSDGQEEFQVVCGAPNVAAGMKVPFAKIGAVLSGDFKIKKAKLRGVESQGMLCSEEELTLAEKSDGLMPLAADAPVGVDVRSYLKLDDNIIDVDLTPNRSDCLSILGMAREVAALNKIPFEAPEVKKTAAVIDDVFPVRVEAPEACPRYVGRVIKGVDLSAPTPQWMVEKLRRSGIRSIDAVVDVTNFVMIELGQPMHAFDLNELADGIVVRMPTPGEKLVLLDGQEITINPDTLVIADNEKPLALAGVMGGEHSGVSEKTKDIFLESAFFAPLHLAGKARSYGLHTDSSHRFERGVDYAHQARAIERATELLLEIVGGQPGPVTEICSKEHLPAKALVNLRHARVDELLGVHLDRTRVEEMLARLGLGVHKVAKDGWTFSAPTHRFDISIEVDLIEEVARLYGYNKLPVTEPMAPLGIKPLPESKVSLRRLKLHLVSRGYQEAITYTFVDQKVLSLLTPEEDTITLANPIASDMAAMRTTLWAGLLQTALYNQNRQQNRIRLFESGLRFLKRGGQIQQDPMLAGLIMGASMPEGWESKKRTVDFYDVKGDLESLLEIPGCNLSFRSAQHPALHPGQTAEVLKDGQPIGVLGALHPRIAKTLNLNGPLYLFELCLNSIADGQVPSFKGVSRFPEIRRDLAIVIDEQTPYADVALAIAQSAGEWRVHHELFDVYHGESVGADKKSLAISIVWRHPERTLRDEEITEAFDNVVKELGNRFGASLRS.

One can recognise a tRNA-binding domain in the interval 39–147; it reads AKPFSGIVVG…ADAPVGVDVR (109 aa). The 77-residue stretch at 400-476 folds into the B5 domain; that stretch reads PAKALVNLRH…RLYGYNKLPV (77 aa). Mg(2+) is bound by residues Asp454, Asp460, Glu463, and Glu464. The FDX-ACB domain maps to 696–789; the sequence is SRFPEIRRDL…LGNRFGASLR (94 aa).

The protein belongs to the phenylalanyl-tRNA synthetase beta subunit family. Type 1 subfamily. As to quaternary structure, tetramer of two alpha and two beta subunits. The cofactor is Mg(2+).

The protein localises to the cytoplasm. It carries out the reaction tRNA(Phe) + L-phenylalanine + ATP = L-phenylalanyl-tRNA(Phe) + AMP + diphosphate + H(+). In Hahella chejuensis (strain KCTC 2396), this protein is Phenylalanine--tRNA ligase beta subunit.